Reading from the N-terminus, the 247-residue chain is Coproheme decarboxylase (247 aa).

Fe-coproporphyrin III contacts are provided by residues R129, 143–147 (YPMDK), H170, Q183, and S221. Y143 is a catalytic residue.

It belongs to the ChdC family. Type 1 subfamily. It depends on Fe-coproporphyrin III as a cofactor.

It carries out the reaction Fe-coproporphyrin III + 2 H2O2 + 2 H(+) = heme b + 2 CO2 + 4 H2O. The catalysed reaction is Fe-coproporphyrin III + H2O2 + H(+) = harderoheme III + CO2 + 2 H2O. It catalyses the reaction harderoheme III + H2O2 + H(+) = heme b + CO2 + 2 H2O. The protein operates within porphyrin-containing compound metabolism; protoheme biosynthesis. Functionally, involved in coproporphyrin-dependent heme b biosynthesis. Catalyzes the decarboxylation of Fe-coproporphyrin III (coproheme) to heme b (protoheme IX), the last step of the pathway. The reaction occurs in a stepwise manner with a three-propionate intermediate. The protein is Coproheme decarboxylase of Bacillus cereus (strain ATCC 10987 / NRS 248).